The primary structure comprises 463 residues: Xanthine permease XanP (463 aa).

The next 12 membrane-spanning stretches (helical) occupy residues 43 to 63, 71 to 91, 93 to 113, 126 to 146, 156 to 176, 192 to 212, 222 to 242, 260 to 280, 352 to 372, 379 to 399, 409 to 429, and 439 to 459; these read LLAMFVAVITPALLICQALGL, IISMSLFASGVASIIQIKAWG, VGSGLLSIQGTSFNFVAPLIM, PTMMAALFGTLMLASCTEMVI, IITPLVSGVVVMIIGLSLIQV, TFGAPKNLLLAGVVLALIILL, VASLVIAMAAGYALAWFMGML, LYYGLGIEWSLLLPLMLVFMI, GFVVALMLIVLGLFPAVSGFV, VLGGATLVMFGTIAASGVRIV, ILIIALSLAVGLGVSQQPLIL, and LLSSGIAAGGITAIVLNLIFP.

The protein belongs to the nucleobase:cation symporter-2 (NCS2) (TC 2.A.40) family.

The protein localises to the cell inner membrane. It carries out the reaction xanthine(in) + H(+)(in) = xanthine(out) + H(+)(out). Functionally, specific, proton motive force-dependent high-affinity transporter for xanthine. The chain is Xanthine permease XanP (xanP) from Escherichia coli O6:H1 (strain CFT073 / ATCC 700928 / UPEC).